Consider the following 235-residue polypeptide: 1-(5-phosphoribosyl)-5-[(5-phosphoribosylamino)methylideneamino] imidazole-4-carboxamide isomerase (235 aa).

The active-site Proton acceptor is aspartate 8. The active-site Proton donor is aspartate 128.

It belongs to the HisA/HisF family.

Its subcellular location is the cytoplasm. The catalysed reaction is 1-(5-phospho-beta-D-ribosyl)-5-[(5-phospho-beta-D-ribosylamino)methylideneamino]imidazole-4-carboxamide = 5-[(5-phospho-1-deoxy-D-ribulos-1-ylimino)methylamino]-1-(5-phospho-beta-D-ribosyl)imidazole-4-carboxamide. It participates in amino-acid biosynthesis; L-histidine biosynthesis; L-histidine from 5-phospho-alpha-D-ribose 1-diphosphate: step 4/9. This chain is 1-(5-phosphoribosyl)-5-[(5-phosphoribosylamino)methylideneamino] imidazole-4-carboxamide isomerase, found in Thermus thermophilus (strain ATCC 27634 / DSM 579 / HB8).